Here is a 339-residue protein sequence, read N- to C-terminus: Dihydroorotase (339 aa).

Residues histidine 12 and histidine 14 each coordinate Zn(2+). Residues 14-16 (HVR) and asparagine 40 contribute to the substrate site. Zn(2+)-binding residues include lysine 94, histidine 133, histidine 167, and aspartate 239. Lysine 94 is subject to N6-carboxylysine. A substrate-binding site is contributed by histidine 133. Aspartate 239 is a catalytic residue. Substrate-binding residues include histidine 243 and alanine 255.

Belongs to the metallo-dependent hydrolases superfamily. DHOase family. Class II DHOase subfamily. Homodimer. It depends on Zn(2+) as a cofactor.

The catalysed reaction is (S)-dihydroorotate + H2O = N-carbamoyl-L-aspartate + H(+). Its pathway is pyrimidine metabolism; UMP biosynthesis via de novo pathway; (S)-dihydroorotate from bicarbonate: step 3/3. Catalyzes the reversible cyclization of carbamoyl aspartate to dihydroorotate. In Helicobacter pylori (strain ATCC 700392 / 26695) (Campylobacter pylori), this protein is Dihydroorotase.